The sequence spans 751 residues: Catalase-peroxidase (751 aa).

Residues methionine 1–aspartate 21 form a disordered region. Positions tryptophan 90–tyrosine 244 form a cross-link, tryptophyl-tyrosyl-methioninium (Trp-Tyr) (with M-270). Histidine 91 functions as the Proton acceptor in the catalytic mechanism. The tract at residues tyrosine 195–alanine 227 is disordered. Residues proline 214–alanine 227 are compositionally biased toward basic and acidic residues. The segment at residues tyrosine 244–methionine 270 is a cross-link (tryptophyl-tyrosyl-methioninium (Tyr-Met) (with W-90)). Residue histidine 285 coordinates heme b. The tract at residues alanine 365–lysine 387 is disordered.

Belongs to the peroxidase family. Peroxidase/catalase subfamily. As to quaternary structure, homodimer or homotetramer. It depends on heme b as a cofactor. Formation of the three residue Trp-Tyr-Met cross-link is important for the catalase, but not the peroxidase activity of the enzyme.

It catalyses the reaction H2O2 + AH2 = A + 2 H2O. The catalysed reaction is 2 H2O2 = O2 + 2 H2O. In terms of biological role, bifunctional enzyme with both catalase and broad-spectrum peroxidase activity. The chain is Catalase-peroxidase from Pseudomonas putida (strain ATCC 700007 / DSM 6899 / JCM 31910 / BCRC 17059 / LMG 24140 / F1).